The chain runs to 326 residues: Transmembrane protein PVRIG (326 aa).

3 consecutive transmembrane segments (helical) span residues 26 to 46, 62 to 78, and 172 to 192; these read LVLP…EVWV, CGFL…VSWG, and LAGI…LLHL. Tyr-233 carries the phosphotyrosine modification. The tract at residues 296–326 is disordered; the sequence is AGERPPHTGPGLTLFPDPRGPRAMEGPLGVR.

Interacts with NECTIN2, hence competing with CD226. Expressed in some types of immune cells. Expressed at low levels on the surface of freshly isolated T-cells and natural killer (NK) cells, predominantly on CD8+ T-cells (mainly memory/effector, but not naive cells) and on both CD16+ and CD16- NK cells. T-cell expression levels are variable among individuals. Not detected in B-cells, naive or helper T-cells, monocytes, nor neutrophils (at protein level). Not detected in dendritic cells.

Its subcellular location is the cell membrane. Cell surface receptor for NECTIN2. May act as a coinhibitory receptor that suppresses T-cell receptor-mediated signals. Following interaction with NECTIN2, inhibits T-cell proliferation. Competes with CD226 for NECTIN2-binding. In Homo sapiens (Human), this protein is Transmembrane protein PVRIG (PVRIG).